The chain runs to 248 residues: Tetrachloro-P-hydroquinone reductive dehalogenase (248 aa).

The 83-residue stretch at 2 to 84 folds into the GST N-terminal domain; it reads PEVSLYNYTM…EAAKLGKVGI (83 aa). The GST C-terminal domain maps to 133 to 248; that stretch reads YAEKYPELRS…RVMPNWKGGI (116 aa).

Belongs to the GST superfamily. Homodimer.

It carries out the reaction 2,6-dichlorohydroquinone + glutathione disulfide + chloride + H(+) = 2,3,6-trichlorohydroquinone + 2 glutathione. The enzyme catalyses 2,3,6-trichlorohydroquinone + glutathione disulfide + chloride = 2,3,5,6-tetrachlorohydroquinone + 2 glutathione. It participates in xenobiotic degradation; pentachlorophenol degradation. Its function is as follows. Sequential reduction of tetrachloro-p-hydroquinone to monochlorophenol, using glutathione as the reducing agent. The sequence is that of Tetrachloro-P-hydroquinone reductive dehalogenase (pcpC) from Sphingobium chlorophenolicum.